The following is a 365-amino-acid chain: UDP-N-acetylglucosamine--N-acetylmuramyl-(pentapeptide) pyrophosphoryl-undecaprenol N-acetylglucosamine transferase (365 aa).

UDP-N-acetyl-alpha-D-glucosamine-binding positions include 17–19 (TGG), Asn129, Arg167, Ser194, Ile250, 269–274 (ALTVSE), and Gln295.

It belongs to the glycosyltransferase 28 family. MurG subfamily.

It localises to the cell inner membrane. The enzyme catalyses di-trans,octa-cis-undecaprenyl diphospho-N-acetyl-alpha-D-muramoyl-L-alanyl-D-glutamyl-meso-2,6-diaminopimeloyl-D-alanyl-D-alanine + UDP-N-acetyl-alpha-D-glucosamine = di-trans,octa-cis-undecaprenyl diphospho-[N-acetyl-alpha-D-glucosaminyl-(1-&gt;4)]-N-acetyl-alpha-D-muramoyl-L-alanyl-D-glutamyl-meso-2,6-diaminopimeloyl-D-alanyl-D-alanine + UDP + H(+). It functions in the pathway cell wall biogenesis; peptidoglycan biosynthesis. Cell wall formation. Catalyzes the transfer of a GlcNAc subunit on undecaprenyl-pyrophosphoryl-MurNAc-pentapeptide (lipid intermediate I) to form undecaprenyl-pyrophosphoryl-MurNAc-(pentapeptide)GlcNAc (lipid intermediate II). The polypeptide is UDP-N-acetylglucosamine--N-acetylmuramyl-(pentapeptide) pyrophosphoryl-undecaprenol N-acetylglucosamine transferase (Shewanella halifaxensis (strain HAW-EB4)).